Consider the following 235-residue polypeptide: MKFPTDLIEGRLVKRYKRFFADVELADGEVVTAHCANTGAMTGIKTPGLPVWLSRSDNPKRKLKYTWELVEAEGTLIGALPNLANSLAEEAVNAGVISELTGYDSLRREVKYGENSRIDLLLEGNDRPPCWVEVKNVHWQRGPGIAEFPDGVTSRGAKHLVELANQVQAGERAVQLFIVQRSDCDVLRPAEDIDPVYARTLRDSAAAGVEVLAYACEVSPTAVIIHRPMRVELSQ.

This sequence belongs to the SfsA family.

The chain is Sugar fermentation stimulation protein homolog from Maricaulis maris (strain MCS10) (Caulobacter maris).